A 382-amino-acid polypeptide reads, in one-letter code: tRNA-specific 2-thiouridylase MnmA (382 aa).

ATP is bound by residues 18–25 and L44; that span reads AMSGGVDS. The active-site Nucleophile is the C112. Residues C112 and C209 are joined by a disulfide bond. An ATP-binding site is contributed by G136. The interaction with tRNA stretch occupies residues 159 to 161; that stretch reads RDQ. Residue C209 is the Cysteine persulfide intermediate of the active site.

It belongs to the MnmA/TRMU family.

It localises to the cytoplasm. The enzyme catalyses S-sulfanyl-L-cysteinyl-[protein] + uridine(34) in tRNA + AH2 + ATP = 2-thiouridine(34) in tRNA + L-cysteinyl-[protein] + A + AMP + diphosphate + H(+). Its function is as follows. Catalyzes the 2-thiolation of uridine at the wobble position (U34) of tRNA, leading to the formation of s(2)U34. The chain is tRNA-specific 2-thiouridylase MnmA from Methylobacterium nodulans (strain LMG 21967 / CNCM I-2342 / ORS 2060).